The sequence spans 112 residues: SPbeta prophage-derived uncharacterized protein YoqB (112 aa).

In Bacillus subtilis (strain 168), this protein is SPbeta prophage-derived uncharacterized protein YoqB (yoqB).